We begin with the raw amino-acid sequence, 160 residues long: MTSALTHLGAQGEANMVDVGDKEETTRTAIAEGFVSMQPETLKTILAGNAKKGDVLGTARIAGIMAAKKTHELIPLCHPLLLTKISVDIEPDHALPGLKVTALARVTGKTGVEMEALTAASVACLTIYDMAKAVDRAMLISGIRLVEKTGGKSGDYKVGA.

Substrate is bound by residues 76 to 78 and 114 to 115; these read LCH and ME. The active site involves Asp-129.

This sequence belongs to the MoaC family. In terms of assembly, homohexamer; trimer of dimers.

It catalyses the reaction (8S)-3',8-cyclo-7,8-dihydroguanosine 5'-triphosphate = cyclic pyranopterin phosphate + diphosphate. The protein operates within cofactor biosynthesis; molybdopterin biosynthesis. Its function is as follows. Catalyzes the conversion of (8S)-3',8-cyclo-7,8-dihydroguanosine 5'-triphosphate to cyclic pyranopterin monophosphate (cPMP). This chain is Cyclic pyranopterin monophosphate synthase, found in Mesorhizobium japonicum (strain LMG 29417 / CECT 9101 / MAFF 303099) (Mesorhizobium loti (strain MAFF 303099)).